Here is a 564-residue protein sequence, read N- to C-terminus: Phenylalanine--tRNA ligase beta subunit (564 aa).

One can recognise a B5 domain in the interval 286 to 362; it reads YFQNSLKINV…IGKGLDNFKS (77 aa). Residues aspartate 340, aspartate 346, glutamate 349, and glutamate 350 each coordinate Mg(2+).

It belongs to the phenylalanyl-tRNA synthetase beta subunit family. Type 2 subfamily. As to quaternary structure, tetramer of two alpha and two beta subunits. The cofactor is Mg(2+).

It is found in the cytoplasm. The enzyme catalyses tRNA(Phe) + L-phenylalanine + ATP = L-phenylalanyl-tRNA(Phe) + AMP + diphosphate + H(+). This chain is Phenylalanine--tRNA ligase beta subunit, found in Borrelia duttonii (strain Ly).